The primary structure comprises 428 residues: Histidine--tRNA ligase (428 aa).

Belongs to the class-II aminoacyl-tRNA synthetase family. As to quaternary structure, homodimer.

The protein resides in the cytoplasm. It catalyses the reaction tRNA(His) + L-histidine + ATP = L-histidyl-tRNA(His) + AMP + diphosphate + H(+). The polypeptide is Histidine--tRNA ligase (hisS) (Chlamydia muridarum (strain MoPn / Nigg)).